A 46-amino-acid chain; its full sequence is uncharacterized protein (46 aa).

Residues 12–34 (HFNHFVIALSFIYGLTELGYLLL) traverse the membrane as a helical segment.

It is found in the cell membrane. This is an uncharacterized protein from Bacillus subtilis (strain 168).